The chain runs to 77 residues: UPF0401 protein c3666 (77 aa).

Belongs to the UPF0401 family.

In Escherichia coli O6:H1 (strain CFT073 / ATCC 700928 / UPEC), this protein is UPF0401 protein c3666.